A 164-amino-acid chain; its full sequence is CB1 cannabinoid receptor-interacting protein 1 (164 aa).

The protein belongs to the CNRIP family. In terms of assembly, interacts with the cannabinoid receptor CNR1 (via C-terminus). Does not interact with cannabinoid receptor CNR2.

Functionally, suppresses cannabinoid receptor CNR1-mediated tonic inhibition of voltage-gated calcium channels. This is CB1 cannabinoid receptor-interacting protein 1 (Cnrip1) from Rattus norvegicus (Rat).